A 98-amino-acid chain; its full sequence is NADH-ubiquinone oxidoreductase chain 4L (98 aa).

3 helical membrane passes run 1–21 (MTSI…GVLM), 28–48 (STLL…SLLI), and 59–79 (APLI…ALLV).

The protein belongs to the complex I subunit 4L family. As to quaternary structure, core subunit of respiratory chain NADH dehydrogenase (Complex I) which is composed of 45 different subunits.

The protein localises to the mitochondrion inner membrane. It catalyses the reaction a ubiquinone + NADH + 5 H(+)(in) = a ubiquinol + NAD(+) + 4 H(+)(out). In terms of biological role, core subunit of the mitochondrial membrane respiratory chain NADH dehydrogenase (Complex I) which catalyzes electron transfer from NADH through the respiratory chain, using ubiquinone as an electron acceptor. Part of the enzyme membrane arm which is embedded in the lipid bilayer and involved in proton translocation. This is NADH-ubiquinone oxidoreductase chain 4L (MT-ND4L) from Phascolarctos cinereus (Koala).